Consider the following 292-residue polypeptide: Xyloglucan endotransglucosylase/hydrolase protein 2 (292 aa).

The N-terminal stretch at 1–24 (MNRIRYCFELVSVLFLMFTANARA) is a signal peptide. One can recognise a GH16 domain in the interval 25-219 (RGRGAIDFDV…WAYAPFKAQY (195 aa)). The active-site Nucleophile is Glu106. Glu110 serves as the catalytic Proton donor. Xyloglucan-binding positions include Glu110, 123 to 125 (QTN), 133 to 135 (GRE), 198 to 199 (NW), and Gly203. 2 disulfides stabilise this stretch: Cys227-Cys239 and Cys275-Cys288. Arg280 provides a ligand contact to xyloglucan.

Belongs to the glycosyl hydrolase 16 family. XTH group 1 subfamily. Post-translationally, contains at least one intrachain disulfide bond essential for its enzymatic activity.

The protein localises to the secreted. It localises to the cell wall. It is found in the extracellular space. The protein resides in the apoplast. It carries out the reaction breaks a beta-(1-&gt;4) bond in the backbone of a xyloglucan and transfers the xyloglucanyl segment on to O-4 of the non-reducing terminal glucose residue of an acceptor, which can be a xyloglucan or an oligosaccharide of xyloglucan.. Functionally, may catalyze xyloglucan endohydrolysis (XEH) and/or endotransglycosylation (XET). Cleaves and religates xyloglucan polymers, an essential constituent of the primary cell wall, and thereby participates in cell wall construction of growing tissues. The chain is Xyloglucan endotransglucosylase/hydrolase protein 2 (XTH2) from Arabidopsis thaliana (Mouse-ear cress).